The following is a 90-amino-acid chain: UPF0729 protein Bm1_03610 (90 aa).

This sequence belongs to the UPF0729 family.

The polypeptide is UPF0729 protein Bm1_03610 (Brugia malayi (Filarial nematode worm)).